A 156-amino-acid chain; its full sequence is Small ribosomal subunit protein uS7 (156 aa).

Belongs to the universal ribosomal protein uS7 family. As to quaternary structure, part of the 30S ribosomal subunit. Contacts proteins S9 and S11.

In terms of biological role, one of the primary rRNA binding proteins, it binds directly to 16S rRNA where it nucleates assembly of the head domain of the 30S subunit. Is located at the subunit interface close to the decoding center, probably blocks exit of the E-site tRNA. This chain is Small ribosomal subunit protein uS7, found in Bradyrhizobium diazoefficiens (strain JCM 10833 / BCRC 13528 / IAM 13628 / NBRC 14792 / USDA 110).